A 238-amino-acid polypeptide reads, in one-letter code: Probable RNA/DNA demethylase ALKBH6 (238 aa).

The Fe2OG dioxygenase domain occupies 96-227 (PANHVLVNQY…RVSLTIRRVP (132 aa)). 2-oxoglutarate contacts are provided by N103 and Y105. Fe cation-binding residues include H114 and D116. The segment at 138-161 (YEPRRPEDDDPTEQPRPPPRPTTS) is disordered. Position 182 (H182) interacts with Fe cation. 2-oxoglutarate is bound by residues R218 and S220.

The protein belongs to the alkB family. Interacts with VCPKMT. Fe(2+) serves as cofactor. Widely expressed, with highest expression in testis and pancreas.

It is found in the cytoplasm. The protein resides in the nucleus. Its function is as follows. Probable Fe(2+)/2-oxoglutarate-dependent dioxygenase involved in oxidative demethylation of nucleic acids. Binds nucleic acids with a preference for ssDNA or ssRNA to other types of DNAs. May play a role in nucleic acid damage repair. This chain is Probable RNA/DNA demethylase ALKBH6, found in Homo sapiens (Human).